A 643-amino-acid polypeptide reads, in one-letter code: 1-deoxy-D-xylulose-5-phosphate synthase (643 aa).

Residues His72 and 113-115 contribute to the thiamine diphosphate site; that span reads GHA. Asp144 is a binding site for Mg(2+). Thiamine diphosphate-binding positions include 145 to 146, Asn174, Tyr287, and Glu370; that span reads GA. Asn174 provides a ligand contact to Mg(2+).

The protein belongs to the transketolase family. DXPS subfamily. As to quaternary structure, homodimer. Mg(2+) is required as a cofactor. It depends on thiamine diphosphate as a cofactor.

The catalysed reaction is D-glyceraldehyde 3-phosphate + pyruvate + H(+) = 1-deoxy-D-xylulose 5-phosphate + CO2. The protein operates within metabolic intermediate biosynthesis; 1-deoxy-D-xylulose 5-phosphate biosynthesis; 1-deoxy-D-xylulose 5-phosphate from D-glyceraldehyde 3-phosphate and pyruvate: step 1/1. In terms of biological role, catalyzes the acyloin condensation reaction between C atoms 2 and 3 of pyruvate and glyceraldehyde 3-phosphate to yield 1-deoxy-D-xylulose-5-phosphate (DXP). This Prochlorococcus marinus (strain MIT 9211) protein is 1-deoxy-D-xylulose-5-phosphate synthase.